We begin with the raw amino-acid sequence, 292 residues long: Phosphoenolpyruvate guanylyltransferase (292 aa).

3 residues coordinate phosphoenolpyruvate: Thr168, Gly184, and Ser187. A disordered region spans residues 243–292 (PLVAEDSGGSGGESGTSAESGLSVPPGIVGGTQRRIVSDASGPGRAKKYP).

The protein belongs to the CofC family.

It carries out the reaction phosphoenolpyruvate + GTP + H(+) = enolpyruvoyl-2-diphospho-5'-guanosine + diphosphate. It participates in cofactor biosynthesis; coenzyme F420 biosynthesis. Guanylyltransferase that catalyzes the activation of phosphoenolpyruvate (PEP) as enolpyruvoyl-2-diphospho-5'-guanosine, via the condensation of PEP with GTP. It is involved in the biosynthesis of coenzyme F420, a hydride carrier cofactor. The sequence is that of Phosphoenolpyruvate guanylyltransferase from Frankia casuarinae (strain DSM 45818 / CECT 9043 / HFP020203 / CcI3).